A 427-amino-acid chain; its full sequence is Adenylosuccinate synthetase (427 aa).

GTP-binding positions include 12–18 (GDEGKGK) and 40–42 (GHT). Catalysis depends on Asp-13, which acts as the Proton acceptor. Mg(2+) contacts are provided by Asp-13 and Gly-40. IMP is bound by residues 13 to 16 (DEGK), 38 to 41 (NAGH), Thr-128, Arg-142, Gln-223, Thr-238, and Arg-302. His-41 functions as the Proton donor in the catalytic mechanism. Position 298–304 (298–304 (TTTGRAR)) interacts with substrate. Residues Arg-304, 330 to 332 (KLD), and 412 to 414 (AVG) each bind GTP.

Belongs to the adenylosuccinate synthetase family. As to quaternary structure, homodimer. It depends on Mg(2+) as a cofactor.

It localises to the cytoplasm. The enzyme catalyses IMP + L-aspartate + GTP = N(6)-(1,2-dicarboxyethyl)-AMP + GDP + phosphate + 2 H(+). It participates in purine metabolism; AMP biosynthesis via de novo pathway; AMP from IMP: step 1/2. Its function is as follows. Plays an important role in the de novo pathway of purine nucleotide biosynthesis. Catalyzes the first committed step in the biosynthesis of AMP from IMP. This is Adenylosuccinate synthetase from Desulfitobacterium hafniense (strain DSM 10664 / DCB-2).